Reading from the N-terminus, the 112-residue chain is Secretoglobin family 2B member 24 (112 aa).

The N-terminal stretch at 1-23 (MKGTLLLLALLMIGELGFHTTEA) is a signal peptide.

Belongs to the secretoglobin family. Expressed in lacrimal gland, at higher level in males than females.

It is found in the secreted. In Mus musculus (Mouse), this protein is Secretoglobin family 2B member 24 (Scgb2b24).